The primary structure comprises 444 residues: Protein kinase C and casein kinase substrate in neurons protein 1 (444 aa).

Residues S2 and S79 each carry the phosphoserine modification. In terms of domain architecture, F-BAR spans 13–283 (EETTDSFWEV…AIRGADAQED (271 aa)). Positions 26-275 (KRTVKRIDDG…HVYRELEQAI (250 aa)) form a coiled coil. 2 disordered regions span residues 175-194 (MNSK…LQDK) and 309-386 (LPHT…DDSK). T184 carries the phosphothreonine modification. Basic and acidic residues predominate over residues 314 to 324 (TKKEKQPKKAE). Over residues 329-351 (TNATGAVESTSQAGDRGSVSSYD) the composition is skewed to polar residues. Phosphoserine is present on residues S346, S348, S349, S361, and S365. Positions 385 to 444 (SKGVRVRALYDYDGQEQDELSFKAGDELTKLGEEDEQGWCRGRLDSGQLGLYPANYVEAI) constitute an SH3 domain. Y394 carries the phosphotyrosine modification. Residues S405 and S430 each carry the phosphoserine modification.

Belongs to the PACSIN family. In terms of assembly, may form heterooligomers with other PACSINs. Interacts with MAPT. Interacts with TRPV4. Interacts (via SH3 domain) with SYNJ1 and WASL. Interacts with DNM2 and DNM3. Interacts with both COBL and DBNL. Identified in a complex composed of COBL, PACSIN1 and WASL. Interacts with EHD1 and EHD3. Homodimer. Interacts (via SH3 domain) with DNM1; the interaction is reduced by DNM1 phosphorylation. Post-translationally, phosphorylated by casein kinase 2 (CK2) and protein kinase C (PKC). Highly expressed in brain and, at much lower levels, in heart and pancreas.

The protein resides in the cytoplasm. Its subcellular location is the cell projection. It is found in the synapse. It localises to the synaptosome. The protein localises to the ruffle membrane. The protein resides in the membrane. Its subcellular location is the cytoplasmic vesicle membrane. It is found in the cytosol. It localises to the cell membrane. In terms of biological role, plays a role in the reorganization of the microtubule cytoskeleton via its interaction with MAPT; this decreases microtubule stability and inhibits MAPT-induced microtubule polymerization. Plays a role in cellular transport processes by recruiting DNM1, DNM2 and DNM3 to membranes. Plays a role in the reorganization of the actin cytoskeleton and in neuron morphogenesis via its interaction with COBL and WASL, and by recruiting COBL to the cell cortex. Plays a role in the regulation of neurite formation, neurite branching and the regulation of neurite length. Required for normal synaptic vesicle endocytosis; this process retrieves previously released neurotransmitters to accommodate multiple cycles of neurotransmission. Required for normal excitatory and inhibitory synaptic transmission. Binds to membranes via its F-BAR domain and mediates membrane tubulation. This is Protein kinase C and casein kinase substrate in neurons protein 1 (PACSIN1) from Homo sapiens (Human).